The following is a 159-amino-acid chain: ATP synthase subunit b (159 aa).

A helical membrane pass occupies residues 2–22 (NISIPQIIAAILNFIILLLIV).

It belongs to the ATPase B chain family. As to quaternary structure, F-type ATPases have 2 components, F(1) - the catalytic core - and F(0) - the membrane proton channel. F(1) has five subunits: alpha(3), beta(3), gamma(1), delta(1), epsilon(1). F(0) has three main subunits: a(1), b(2) and c(10-14). The alpha and beta chains form an alternating ring which encloses part of the gamma chain. F(1) is attached to F(0) by a central stalk formed by the gamma and epsilon chains, while a peripheral stalk is formed by the delta and b chains.

Its subcellular location is the cell membrane. In terms of biological role, f(1)F(0) ATP synthase produces ATP from ADP in the presence of a proton or sodium gradient. F-type ATPases consist of two structural domains, F(1) containing the extramembraneous catalytic core and F(0) containing the membrane proton channel, linked together by a central stalk and a peripheral stalk. During catalysis, ATP synthesis in the catalytic domain of F(1) is coupled via a rotary mechanism of the central stalk subunits to proton translocation. Component of the F(0) channel, it forms part of the peripheral stalk, linking F(1) to F(0). The chain is ATP synthase subunit b from Clostridium botulinum (strain ATCC 19397 / Type A).